The sequence spans 119 residues: Protein TusC (119 aa).

This sequence belongs to the DsrF/TusC family. Heterohexamer, formed by a dimer of trimers. The hexameric TusBCD complex contains 2 copies each of TusB, TusC and TusD. The TusBCD complex interacts with TusE.

The protein resides in the cytoplasm. Part of a sulfur-relay system required for 2-thiolation of 5-methylaminomethyl-2-thiouridine (mnm(5)s(2)U) at tRNA wobble positions. This is Protein TusC from Cronobacter sakazakii (strain ATCC BAA-894) (Enterobacter sakazakii).